We begin with the raw amino-acid sequence, 150 residues long: Putative F-box protein At2g33655 (150 aa).

The F-box domain occupies 1–47 (MEKMSDLPRELVEEILSRVPVKSMREVRVTCKTWNALSKHISKAEAA).

This chain is Putative F-box protein At2g33655, found in Arabidopsis thaliana (Mouse-ear cress).